Here is a 154-residue protein sequence, read N- to C-terminus: 6,7-dimethyl-8-ribityllumazine synthase (154 aa).

5-amino-6-(D-ribitylamino)uracil contacts are provided by residues F22, 57 to 59 (VCE), and 81 to 83 (TVI). 86 to 87 (KT) is a (2S)-2-hydroxy-3-oxobutyl phosphate binding site. Residue H89 is the Proton donor of the active site. V114 is a binding site for 5-amino-6-(D-ribitylamino)uracil. Residue R128 participates in (2S)-2-hydroxy-3-oxobutyl phosphate binding.

This sequence belongs to the DMRL synthase family. Forms an icosahedral capsid composed of 60 subunits, arranged as a dodecamer of pentamers.

The catalysed reaction is (2S)-2-hydroxy-3-oxobutyl phosphate + 5-amino-6-(D-ribitylamino)uracil = 6,7-dimethyl-8-(1-D-ribityl)lumazine + phosphate + 2 H2O + H(+). Its pathway is cofactor biosynthesis; riboflavin biosynthesis; riboflavin from 2-hydroxy-3-oxobutyl phosphate and 5-amino-6-(D-ribitylamino)uracil: step 1/2. Functionally, catalyzes the formation of 6,7-dimethyl-8-ribityllumazine by condensation of 5-amino-6-(D-ribitylamino)uracil with 3,4-dihydroxy-2-butanone 4-phosphate. This is the penultimate step in the biosynthesis of riboflavin. The chain is 6,7-dimethyl-8-ribityllumazine synthase from Wigglesworthia glossinidia brevipalpis.